Reading from the N-terminus, the 1048-residue chain is Bifunctional heparan sulfate N-deacetylase/N-sulfotransferase (1048 aa).

The Cytoplasmic portion of the chain corresponds to 1-172 (MTISGGNQHN…RRCFGINVRR (172 aa)). A helical; Signal-anchor for type II membrane protein transmembrane segment spans residues 173–192 (CVLALLAITMVSIFYYTHYV). The tract at residues 192–752 (VDTGVFNGLI…VRHKKIWSKT (561 aa)) is heparan sulfate N-deacetylase. Topologically, residues 193–1048 (DTGVFNGLIQ…WLKDDLSTGT (856 aa)) are lumenal. 2 N-linked (GlcNAc...) asparagine glycosylation sites follow: asparagine 388 and asparagine 555. The interval 753-1048 (KNCDSLPKFL…WLKDDLSTGT (296 aa)) is heparan sulfate N-sulfotransferase. Residue lysine 768 is the For sulfotransferase activity of the active site. 768–772 (KTGTT) lines the 3'-phosphoadenylyl sulfate pocket. Asparagine 823 is a glycosylation site (N-linked (GlcNAc...) asparagine). Residue serine 877 participates in 3'-phosphoadenylyl sulfate binding. The N-linked (GlcNAc...) asparagine glycan is linked to asparagine 892. Cysteine 983 and cysteine 993 are joined by a disulfide. 3'-phosphoadenylyl sulfate is bound at residue 998–1002 (KGRQY).

This sequence belongs to the sulfotransferase 1 family. NDST subfamily. Monomer.

The protein resides in the golgi apparatus membrane. The enzyme catalyses alpha-D-glucosaminyl-[heparan sulfate](n) + 3'-phosphoadenylyl sulfate = N-sulfo-alpha-D-glucosaminyl-[heparan sulfate](n) + adenosine 3',5'-bisphosphate + 2 H(+). Its pathway is glycan metabolism; heparan sulfate biosynthesis. The protein operates within glycan metabolism; heparin biosynthesis. Essential bifunctional enzyme that catalyzes both the N-deacetylation and the N-sulfation of glucosamine (GlcNAc) of the glycosaminoglycan in heparan sulfate. Modifies the GlcNAc-GlcA disaccharide repeating sugar backbone to make N-sulfated heparosan, a prerequisite substrate for later modifications in heparin biosynthesis. Plays a role in diffusion of morphogen wingless (wg) via its role in heparan sulfate proteoglycans (HSPGs) biosynthesis, HSPGs being required for movement of wg morphogens. Required for wg signaling during both embryonic and imaginal disk development. Also required for FGF receptor signaling. This chain is Bifunctional heparan sulfate N-deacetylase/N-sulfotransferase (sfl), found in Drosophila melanogaster (Fruit fly).